Reading from the N-terminus, the 110-residue chain is UPF0060 membrane protein Nmul_A0351 (110 aa).

Transmembrane regions (helical) follow at residues 7–27 (LFLFLATALAEIVGCYLPYLW), 33–53 (SAWLLVPAAASLALFAWLLTL), 63–83 (AAYGGVYVSVAVLWLWAVDGV), and 87–107 (AWDMAGSLLALTGMAIIMFGP).

The protein belongs to the UPF0060 family.

The protein resides in the cell inner membrane. The sequence is that of UPF0060 membrane protein Nmul_A0351 from Nitrosospira multiformis (strain ATCC 25196 / NCIMB 11849 / C 71).